The primary structure comprises 132 residues: Ribosome-binding factor A (132 aa).

It belongs to the RbfA family. As to quaternary structure, monomer. Binds 30S ribosomal subunits, but not 50S ribosomal subunits or 70S ribosomes.

The protein resides in the cytoplasm. In terms of biological role, one of several proteins that assist in the late maturation steps of the functional core of the 30S ribosomal subunit. Associates with free 30S ribosomal subunits (but not with 30S subunits that are part of 70S ribosomes or polysomes). Required for efficient processing of 16S rRNA. May interact with the 5'-terminal helix region of 16S rRNA. This Pseudomonas putida (strain W619) protein is Ribosome-binding factor A.